A 394-amino-acid chain; its full sequence is uncharacterized protein (394 aa).

Positions 7–51 (RKVIPNMPDLILRKIFDQYDYPVLCKMERVCRRWTNIINSKFRKE) constitute an F-box domain.

This is an uncharacterized protein from Caenorhabditis elegans.